The chain runs to 419 residues: Caspase-12 (419 aa).

Positions 1 to 92 (MAARRTHERD…QLSLQFSNDE (92 aa)) constitute a CARD domain. S85 bears the Phosphoserine mark. Residues 88–113 (FSNDEDDGPQKICTPSSPSESKRKVE) form a disordered region. Residues H250 and C298 contribute to the active site.

It belongs to the peptidase C14A family. Heterotetramer that consists of two anti-parallel arranged heterodimers, each one formed by two subunits (Potential). Interacts with TRAF2 under resting conditions; this interaction is reduced in ER stress conditions. In terms of tissue distribution, mainly expressed in skeletal muscle and lung.

Its function is as follows. Involved in the activation cascade of caspases responsible for apoptosis execution. The chain is Caspase-12 (Casp12) from Mus musculus (Mouse).